The chain runs to 177 residues: Large ribosomal subunit protein uL6 (177 aa).

Belongs to the universal ribosomal protein uL6 family. In terms of assembly, part of the 50S ribosomal subunit.

This protein binds to the 23S rRNA, and is important in its secondary structure. It is located near the subunit interface in the base of the L7/L12 stalk, and near the tRNA binding site of the peptidyltransferase center. This is Large ribosomal subunit protein uL6 from Natronomonas pharaonis (strain ATCC 35678 / DSM 2160 / CIP 103997 / JCM 8858 / NBRC 14720 / NCIMB 2260 / Gabara) (Halobacterium pharaonis).